A 376-amino-acid polypeptide reads, in one-letter code: MIYELFYPLKFHYGWLSWLNVLRYIPFRTIMATITAMVLTFVLAPWFIRELRRKQIGQVVRAEGPETHKIKAGTPTMGGALILLSLLLPTVLWADLRNPFVLATTAVTAGYGVIGYLDDFLKIKRRNSGGLPGRYKLIGQVLIGGAAVAYTFLLASKLPPDWAEIRTRLAIPFVAFSKYPIELPLYVYIPFAVFVVVATSNAVNLTDGLDGLAIGPVIINAGTYLILAYIVGASIASFSLATYLDIPAIASAGELSVYCGSVIGAGIGFLWYNTYPAQVFMGDVGSLALGGGLGMLAVFTKNELLSIILGGIFFIETVSVITQVLSFKLTGKRVFLMAPIHHHYEKKGWAEPKIIVRFWIISILLALVSLASMKLR.

Helical transmembrane passes span 28–48 (RTIM…PWFI), 76–96 (TMGG…WADL), 100–120 (FVLA…LDDF), 135–155 (YKLI…FLLA), 179–199 (YPIE…VVAT), 211–231 (GLAI…AYIV), 252–272 (AGEL…FLWY), 279–299 (VFMG…LAVF), 307–327 (IILG…VLSF), and 353–373 (KIIV…LASM).

This sequence belongs to the glycosyltransferase 4 family. MraY subfamily. Mg(2+) is required as a cofactor.

The protein resides in the cell inner membrane. It catalyses the reaction UDP-N-acetyl-alpha-D-muramoyl-L-alanyl-gamma-D-glutamyl-meso-2,6-diaminopimeloyl-D-alanyl-D-alanine + di-trans,octa-cis-undecaprenyl phosphate = di-trans,octa-cis-undecaprenyl diphospho-N-acetyl-alpha-D-muramoyl-L-alanyl-D-glutamyl-meso-2,6-diaminopimeloyl-D-alanyl-D-alanine + UMP. It participates in cell wall biogenesis; peptidoglycan biosynthesis. Catalyzes the initial step of the lipid cycle reactions in the biosynthesis of the cell wall peptidoglycan: transfers peptidoglycan precursor phospho-MurNAc-pentapeptide from UDP-MurNAc-pentapeptide onto the lipid carrier undecaprenyl phosphate, yielding undecaprenyl-pyrophosphoryl-MurNAc-pentapeptide, known as lipid I. In Sorangium cellulosum (strain So ce56) (Polyangium cellulosum (strain So ce56)), this protein is Phospho-N-acetylmuramoyl-pentapeptide-transferase.